Here is an 85-residue protein sequence, read N- to C-terminus: Photosystem I reaction center subunit PsaK (85 aa).

2 helical membrane passes run 13-33 (VSWT…AIAI) and 59-79 (GAML…ILGL).

Belongs to the PsaG/PsaK family.

The protein localises to the cellular thylakoid membrane. This chain is Photosystem I reaction center subunit PsaK, found in Synechococcus sp. (strain WH7803).